Consider the following 344-residue polypeptide: MHCPICHHRAHVVYCAHCINTSPSLLLKLKLDLILLKDENKELNGKVEQILNEAMNYDQLDIKRMEKKKDPLMNSLMKLDVLRMKKNNNLIRHRIEQLNERIYSKRNHISELKVEIDNYKCYKVGTGTDKLIEQVEISDAKNKLAQVSKICESVRDYKLNLLNNWFVIQKLQDNFQIPFAIAFQPLISLKNFRVLPLAITNDSINIMWKYISFFSDILMIKLPYTNKICEQPMFEFSDSIQTVVQRLIKLIINILQICRHLKLVPSTPMDIPWLLDQYDVDGLFYNMVKRNKMKCRSVSLYWTFGMLYSMVLDNMNNPQRGHPARRTAPPPTVTGPHDRWYVVG.

A cysteine repeats region spans residues 3–18 (CPICHHRAHVVYCAHC). Residues 26-156 (LLKLKLDLIL…VSKICESVRD (131 aa)) adopt a coiled-coil conformation.

Belongs to the ATG14 family. Component of the autophagy-specific VPS34 PI3-kinase complex I composed of VPS15, VPS30, VPS34 and ATG14.

Its subcellular location is the preautophagosomal structure membrane. The protein resides in the vacuole membrane. Its function is as follows. Required for cytoplasm to vacuole transport (Cvt) and autophagy as a part of the autophagy-specific VPS34 PI3-kinase complex I. This complex is essential to recruit the ATG8-phosphatidylinositol conjugate and the ATG12-ATG5 conjugate to the pre-autophagosomal structure. ATG14 mediates the specific binding of the VPS34 PI3-kinase complex I to the preautophagosomal structure (PAS). This is Autophagy-related protein 14 (ATG14) from Saccharomyces cerevisiae (strain YJM789) (Baker's yeast).